The sequence spans 270 residues: uncharacterized protein (270 aa).

2 disordered regions span residues 35-67 (IKQDNNNNNNNNTNVSLSPSIKSQATSSTGGNK) and 168-204 (SNNNNNNNNNNNNNNNNNNNNNNNNDDDQQKDIDNSN). Low complexity predominate over residues 39-48 (NNNNNNNNTN). Positions 49-67 (VSLSPSIKSQATSSTGGNK) are enriched in polar residues. The segment covering 168–191 (SNNNNNNNNNNNNNNNNNNNNNNN) has biased composition (low complexity).

This is an uncharacterized protein from Dictyostelium discoideum (Social amoeba).